The following is a 180-amino-acid chain: Alkyl hydroperoxide reductase AhpD (180 aa).

Catalysis depends on Cys131, which acts as the Proton donor. Cysteines 131 and 134 form a disulfide. Cys134 functions as the Cysteine sulfenic acid (-SOH) intermediate in the catalytic mechanism.

It belongs to the AhpD family.

It carries out the reaction N(6)-[(R)-dihydrolipoyl]-L-lysyl-[lipoyl-carrier protein] + a hydroperoxide = N(6)-[(R)-lipoyl]-L-lysyl-[lipoyl-carrier protein] + an alcohol + H2O. Functionally, antioxidant protein with alkyl hydroperoxidase activity. Required for the reduction of the AhpC active site cysteine residues and for the regeneration of the AhpC enzyme activity. The chain is Alkyl hydroperoxide reductase AhpD from Beijerinckia indica subsp. indica (strain ATCC 9039 / DSM 1715 / NCIMB 8712).